The sequence spans 31 residues: Cytochrome b6-f complex subunit 6 (31 aa).

A helical transmembrane segment spans residues isoleucine 4–serine 26.

Belongs to the PetL family. The 4 large subunits of the cytochrome b6-f complex are cytochrome b6, subunit IV (17 kDa polypeptide, PetD), cytochrome f and the Rieske protein, while the 4 small subunits are PetG, PetL, PetM and PetN. The complex functions as a dimer.

The protein localises to the plastid. It is found in the chloroplast thylakoid membrane. Functionally, component of the cytochrome b6-f complex, which mediates electron transfer between photosystem II (PSII) and photosystem I (PSI), cyclic electron flow around PSI, and state transitions. PetL is important for photoautotrophic growth as well as for electron transfer efficiency and stability of the cytochrome b6-f complex. This Chloranthus spicatus (Chulantree) protein is Cytochrome b6-f complex subunit 6.